The chain runs to 371 residues: Surface protein P12p (371 aa).

Positions 1 to 20 are cleaved as a signal peptide; that stretch reads MHIVSFIIFFFALFFPISIC. 6-Cys domains are found at residues 23–168 and 169–343; these read INGV…LKKN and ILYG…FSNQ. 4 disulfide bridges follow: Cys-27–Cys-62, Cys-76–Cys-144, Cys-93–Cys-142, and Cys-173–Cys-245. The N-linked (GlcNAc...) asparagine glycan is linked to Asn-184. The segment at 202-239 is disordered; sequence GNNNNDDDNNDDDNNNDNNNNDNNNNNNNNNNNNNNNN. Positions 206–216 are enriched in acidic residues; the sequence is NDDDNNDDDNN. Positions 217-239 are enriched in low complexity; sequence NDNNNNDNNNNNNNNNNNNNNNN. N-linked (GlcNAc...) asparagine glycans are attached at residues Asn-242 and Asn-246. Disulfide bonds link Cys-260/Cys-323 and Cys-271/Cys-321.

It localises to the cell surface. It is found in the cell membrane. In Plasmodium falciparum (isolate 3D7), this protein is Surface protein P12p (PFS12P).